The sequence spans 212 residues: MPTREIRHPLIRHKIGLMRRADISTKNFRELAQEVGALLTYEATNDLPLESYEIEGWAGAVQVEKIAGKKITVVPILRAGIGMLDGVLSLIPGAKVSAVGVARNEETLEAHTYLEKLAPEIDSRLALIIDPMLATGGSMVATIDLLKKAGCKDIRAMVLVAAPEGIKAVEQAHPDVTIFTASIDQRLNEHGYIIPGLGDAGDKIFGTKQKDA.

5-phospho-alpha-D-ribose 1-diphosphate is bound by residues Arg78, Arg103, and 130–138 (DPMLATGGS). Uracil-binding positions include Ile193 and 198 to 200 (GDA). Asp199 lines the 5-phospho-alpha-D-ribose 1-diphosphate pocket.

This sequence belongs to the UPRTase family. Mg(2+) serves as cofactor.

The enzyme catalyses UMP + diphosphate = 5-phospho-alpha-D-ribose 1-diphosphate + uracil. The protein operates within pyrimidine metabolism; UMP biosynthesis via salvage pathway; UMP from uracil: step 1/1. With respect to regulation, allosterically activated by GTP. Its function is as follows. Catalyzes the conversion of uracil and 5-phospho-alpha-D-ribose 1-diphosphate (PRPP) to UMP and diphosphate. In Ectopseudomonas mendocina (strain ymp) (Pseudomonas mendocina), this protein is Uracil phosphoribosyltransferase.